Consider the following 520-residue polypeptide: Ribonuclease Y (520 aa).

The helical transmembrane segment at 1-21 (MDIITIIIAVIAGIGGGFGIS) threads the bilayer. One can recognise a KH domain in the interval 210–276 (CVSVFNIESD…RLALHKLVTD (67 aa)). In terms of domain architecture, HD spans 336 to 429 (LLQHSREVSK…VQVCDAISGA (94 aa)).

Belongs to the RNase Y family.

The protein resides in the cell membrane. Functionally, endoribonuclease that initiates mRNA decay. The polypeptide is Ribonuclease Y (Flavobacterium psychrophilum (strain ATCC 49511 / DSM 21280 / CIP 103535 / JIP02/86)).